Reading from the N-terminus, the 256-residue chain is Thiazole synthase (256 aa).

The Schiff-base intermediate with DXP role is filled by K96. 1-deoxy-D-xylulose 5-phosphate is bound by residues G157, 184 to 185 (AG), and 206 to 207 (NT).

This sequence belongs to the ThiG family. In terms of assembly, homotetramer. Forms heterodimers with either ThiH or ThiS.

The protein localises to the cytoplasm. The catalysed reaction is [ThiS sulfur-carrier protein]-C-terminal-Gly-aminoethanethioate + 2-iminoacetate + 1-deoxy-D-xylulose 5-phosphate = [ThiS sulfur-carrier protein]-C-terminal Gly-Gly + 2-[(2R,5Z)-2-carboxy-4-methylthiazol-5(2H)-ylidene]ethyl phosphate + 2 H2O + H(+). The protein operates within cofactor biosynthesis; thiamine diphosphate biosynthesis. In terms of biological role, catalyzes the rearrangement of 1-deoxy-D-xylulose 5-phosphate (DXP) to produce the thiazole phosphate moiety of thiamine. Sulfur is provided by the thiocarboxylate moiety of the carrier protein ThiS. In vitro, sulfur can be provided by H(2)S. This chain is Thiazole synthase, found in Brucella abortus (strain S19).